Reading from the N-terminus, the 73-residue chain is Protein SlyX homolog (73 aa).

Belongs to the SlyX family.

The chain is Protein SlyX homolog from Pasteurella multocida (strain Pm70).